A 190-amino-acid chain; its full sequence is Thymidylate kinase (190 aa).

Residue 7–14 participates in ATP binding; sequence GVDTCGKS.

The protein belongs to the thymidylate kinase family.

It carries out the reaction dTMP + ATP = dTDP + ADP. Its function is as follows. Phosphorylation of dTMP to form dTDP in both de novo and salvage pathways of dTTP synthesis. The sequence is that of Thymidylate kinase from Wolinella succinogenes (strain ATCC 29543 / DSM 1740 / CCUG 13145 / JCM 31913 / LMG 7466 / NCTC 11488 / FDC 602W) (Vibrio succinogenes).